The chain runs to 352 residues: Holliday junction branch migration complex subunit RuvB (352 aa).

A large ATPase domain (RuvB-L) region spans residues 13–201; it reads IPRSRKELRL…FGLCHKIEFY (189 aa). Residues Leu-37, Arg-41, Gly-82, Lys-85, Thr-86, Thr-87, 148 to 150, Arg-191, Tyr-201, and Arg-238 each bind ATP; that span reads EDF. Thr-86 contributes to the Mg(2+) binding site. Positions 202–273 are small ATPAse domain (RuvB-S); that stretch reads SNDELKQIIF…IIEKALDSQK (72 aa). Residues 276–352 are head domain (RuvB-H); sequence NRGLDNVDRK…KYISSNNEKY (77 aa). The DNA site is built by Arg-330 and Arg-335.

It belongs to the RuvB family. In terms of assembly, homohexamer. Forms an RuvA(8)-RuvB(12)-Holliday junction (HJ) complex. HJ DNA is sandwiched between 2 RuvA tetramers; dsDNA enters through RuvA and exits via RuvB. An RuvB hexamer assembles on each DNA strand where it exits the tetramer. Each RuvB hexamer is contacted by two RuvA subunits (via domain III) on 2 adjacent RuvB subunits; this complex drives branch migration. In the full resolvosome a probable DNA-RuvA(4)-RuvB(12)-RuvC(2) complex forms which resolves the HJ.

It localises to the cytoplasm. The catalysed reaction is ATP + H2O = ADP + phosphate + H(+). Its function is as follows. The RuvA-RuvB-RuvC complex processes Holliday junction (HJ) DNA during genetic recombination and DNA repair, while the RuvA-RuvB complex plays an important role in the rescue of blocked DNA replication forks via replication fork reversal (RFR). RuvA specifically binds to HJ cruciform DNA, conferring on it an open structure. The RuvB hexamer acts as an ATP-dependent pump, pulling dsDNA into and through the RuvAB complex. RuvB forms 2 homohexamers on either side of HJ DNA bound by 1 or 2 RuvA tetramers; 4 subunits per hexamer contact DNA at a time. Coordinated motions by a converter formed by DNA-disengaged RuvB subunits stimulates ATP hydrolysis and nucleotide exchange. Immobilization of the converter enables RuvB to convert the ATP-contained energy into a lever motion, pulling 2 nucleotides of DNA out of the RuvA tetramer per ATP hydrolyzed, thus driving DNA branch migration. The RuvB motors rotate together with the DNA substrate, which together with the progressing nucleotide cycle form the mechanistic basis for DNA recombination by continuous HJ branch migration. Branch migration allows RuvC to scan DNA until it finds its consensus sequence, where it cleaves and resolves cruciform DNA. This chain is Holliday junction branch migration complex subunit RuvB, found in Prochlorococcus marinus (strain MIT 9515).